The following is a 154-amino-acid chain: 6,7-dimethyl-8-ribityllumazine synthase (154 aa).

Residues W22, A56–E58, and C80–I82 contribute to the 5-amino-6-(D-ribitylamino)uracil site. Position 85 to 86 (D85 to T86) interacts with (2S)-2-hydroxy-3-oxobutyl phosphate. The Proton donor role is filled by H88. N113 is a binding site for 5-amino-6-(D-ribitylamino)uracil. Position 127 (R127) interacts with (2S)-2-hydroxy-3-oxobutyl phosphate.

This sequence belongs to the DMRL synthase family. As to quaternary structure, forms an icosahedral capsid composed of 60 subunits, arranged as a dodecamer of pentamers.

The enzyme catalyses (2S)-2-hydroxy-3-oxobutyl phosphate + 5-amino-6-(D-ribitylamino)uracil = 6,7-dimethyl-8-(1-D-ribityl)lumazine + phosphate + 2 H2O + H(+). It functions in the pathway cofactor biosynthesis; riboflavin biosynthesis; riboflavin from 2-hydroxy-3-oxobutyl phosphate and 5-amino-6-(D-ribitylamino)uracil: step 1/2. Its function is as follows. Catalyzes the formation of 6,7-dimethyl-8-ribityllumazine by condensation of 5-amino-6-(D-ribitylamino)uracil with 3,4-dihydroxy-2-butanone 4-phosphate. This is the penultimate step in the biosynthesis of riboflavin. The polypeptide is 6,7-dimethyl-8-ribityllumazine synthase (Xanthomonas campestris pv. campestris (strain 8004)).